The chain runs to 338 residues: tRNA N6-adenosine threonylcarbamoyltransferase (338 aa).

The Fe cation site is built by His110 and His114. Residues 132-136 (VLSGG), Asp165, Gly178, and Asn274 each bind substrate. Asp298 is a binding site for Fe cation.

It belongs to the KAE1 / TsaD family. The cofactor is Fe(2+).

It localises to the cytoplasm. It carries out the reaction L-threonylcarbamoyladenylate + adenosine(37) in tRNA = N(6)-L-threonylcarbamoyladenosine(37) in tRNA + AMP + H(+). Functionally, required for the formation of a threonylcarbamoyl group on adenosine at position 37 (t(6)A37) in tRNAs that read codons beginning with adenine. Is involved in the transfer of the threonylcarbamoyl moiety of threonylcarbamoyl-AMP (TC-AMP) to the N6 group of A37, together with TsaE and TsaB. TsaD likely plays a direct catalytic role in this reaction. The protein is tRNA N6-adenosine threonylcarbamoyltransferase of Borrelia recurrentis (strain A1).